Consider the following 651-residue polypeptide: Acetyl-coenzyme A synthetase (651 aa).

CoA contacts are provided by residues 190–193, Thr-312, and Asn-336; that span reads RGGK. ATP is bound by residues 388–390, 412–417, Asp-501, and Arg-516; these read GEP and DTWWQT. A CoA-binding site is contributed by Ser-524. Arg-527 provides a ligand contact to ATP. Mg(2+) contacts are provided by Val-538, His-540, and Val-543. Arg-585 serves as a coordination point for CoA. At Lys-610 the chain carries N6-acetyllysine.

Belongs to the ATP-dependent AMP-binding enzyme family. Mg(2+) is required as a cofactor. Post-translationally, acetylated. Deacetylation by the SIR2-homolog deacetylase activates the enzyme.

The catalysed reaction is acetate + ATP + CoA = acetyl-CoA + AMP + diphosphate. Catalyzes the conversion of acetate into acetyl-CoA (AcCoA), an essential intermediate at the junction of anabolic and catabolic pathways. AcsA undergoes a two-step reaction. In the first half reaction, AcsA combines acetate with ATP to form acetyl-adenylate (AcAMP) intermediate. In the second half reaction, it can then transfer the acetyl group from AcAMP to the sulfhydryl group of CoA, forming the product AcCoA. This chain is Acetyl-coenzyme A synthetase, found in Mesorhizobium japonicum (strain LMG 29417 / CECT 9101 / MAFF 303099) (Mesorhizobium loti (strain MAFF 303099)).